The following is a 90-amino-acid chain: uncharacterized protein (90 aa).

Residues 13 to 34 (APEGMGPHHAASSSHHSAQHHH) form a disordered region. The helical transmembrane segment at 52–72 (YKMWFLYALILALIFGVFMWW) threads the bilayer.

The protein resides in the host membrane. This is an uncharacterized protein from Invertebrate iridescent virus 3 (IIV-3).